A 315-amino-acid chain; its full sequence is Ribosomal protein L11 methyltransferase (315 aa).

S-adenosyl-L-methionine-binding residues include Thr-152, Gly-185, Asp-207, and Asn-249.

Belongs to the methyltransferase superfamily. PrmA family.

The protein localises to the cytoplasm. It carries out the reaction L-lysyl-[protein] + 3 S-adenosyl-L-methionine = N(6),N(6),N(6)-trimethyl-L-lysyl-[protein] + 3 S-adenosyl-L-homocysteine + 3 H(+). In terms of biological role, methylates ribosomal protein L11. This Geotalea uraniireducens (strain Rf4) (Geobacter uraniireducens) protein is Ribosomal protein L11 methyltransferase.